Here is a 651-residue protein sequence, read N- to C-terminus: Ion-translocating oxidoreductase complex subunit C (651 aa).

2 4Fe-4S ferredoxin-type domains span residues 368 to 398 (EYAE…QQLY) and 408 to 437 (KSEE…IQYF). The [4Fe-4S] cluster site is built by cysteine 378, cysteine 381, cysteine 384, cysteine 388, cysteine 417, cysteine 420, cysteine 423, and cysteine 427. Composition is skewed to basic and acidic residues over residues 465 to 477 (QARM…ERKA) and 485 to 513 (ARRE…KANE). Disordered stretches follow at residues 465-565 (QARM…QPTD) and 583-624 (LAQA…DPKK). Polar residues-rich tracts occupy residues 554-564 (VENQEQQTQPT) and 587-600 (NSTS…QTAE). The segment covering 602 to 614 (EVEKTKSAVEKTQ) has biased composition (basic and acidic residues).

It belongs to the 4Fe4S bacterial-type ferredoxin family. RnfC subfamily. In terms of assembly, the complex is composed of six subunits: RnfA, RnfB, RnfC, RnfD, RnfE and RnfG. Requires [4Fe-4S] cluster as cofactor.

It is found in the cell inner membrane. Functionally, part of a membrane-bound complex that couples electron transfer with translocation of ions across the membrane. The sequence is that of Ion-translocating oxidoreductase complex subunit C from Haemophilus influenzae (strain PittEE).